A 249-amino-acid chain; its full sequence is tRNA (guanine-N(1)-)-methyltransferase (249 aa).

S-adenosyl-L-methionine contacts are provided by residues G113 and 133–138; that span reads LGDFVL.

Belongs to the RNA methyltransferase TrmD family. Homodimer.

Its subcellular location is the cytoplasm. It carries out the reaction guanosine(37) in tRNA + S-adenosyl-L-methionine = N(1)-methylguanosine(37) in tRNA + S-adenosyl-L-homocysteine + H(+). Specifically methylates guanosine-37 in various tRNAs. The protein is tRNA (guanine-N(1)-)-methyltransferase of Leptothrix cholodnii (strain ATCC 51168 / LMG 8142 / SP-6) (Leptothrix discophora (strain SP-6)).